The chain runs to 545 residues: Carboxypeptidase Y homolog A (545 aa).

Positions 1–17 are cleaved as a signal peptide; that stretch reads MKSLALALLVGGAIAAG. The propeptide occupies 18–123; it reads PQQQVLQAPV…KLEAYDLRVK (106 aa). Disulfide bonds link cysteine 177/cysteine 416, cysteine 311/cysteine 325, cysteine 335/cysteine 358, cysteine 342/cysteine 351, and cysteine 380/cysteine 386. N-linked (GlcNAc...) asparagine glycosylation occurs at asparagine 208. Serine 264 is an active-site residue. Aspartate 455 is an active-site residue. Residues asparagine 485, asparagine 491, and asparagine 506 are each glycosylated (N-linked (GlcNAc...) asparagine). Histidine 517 is an active-site residue.

Belongs to the peptidase S10 family.

It localises to the vacuole. The enzyme catalyses Release of a C-terminal amino acid with broad specificity.. Functionally, vacuolar carboxypeptidase involved in degradation of small peptides. Digests preferentially peptides containing an aliphatic or hydrophobic residue in P1' position, as well as methionine, leucine or phenylalanine in P1 position of ester substrate. This Blastomyces gilchristii (strain SLH14081) (Blastomyces dermatitidis) protein is Carboxypeptidase Y homolog A (CPYA).